Here is a 65-residue protein sequence, read N- to C-terminus: Large ribosomal subunit protein uL29 (65 aa).

The protein belongs to the universal ribosomal protein uL29 family.

In Acinetobacter baumannii (strain AB307-0294), this protein is Large ribosomal subunit protein uL29.